The chain runs to 341 residues: Anthranilate phosphoribosyltransferase (341 aa).

5-phospho-alpha-D-ribose 1-diphosphate-binding positions include Gly-79, 82–83, Thr-87, 89–92, 107–115, and Ser-119; these read GD, NIST, and KHGNRAVSS. Position 79 (Gly-79) interacts with anthranilate. Mg(2+) is bound at residue Ser-91. An anthranilate-binding site is contributed by Asn-110. An anthranilate-binding site is contributed by Arg-165. The Mg(2+) site is built by Asp-224 and Glu-225.

The protein belongs to the anthranilate phosphoribosyltransferase family. In terms of assembly, homodimer. The cofactor is Mg(2+).

The catalysed reaction is N-(5-phospho-beta-D-ribosyl)anthranilate + diphosphate = 5-phospho-alpha-D-ribose 1-diphosphate + anthranilate. It functions in the pathway amino-acid biosynthesis; L-tryptophan biosynthesis; L-tryptophan from chorismate: step 2/5. In terms of biological role, catalyzes the transfer of the phosphoribosyl group of 5-phosphorylribose-1-pyrophosphate (PRPP) to anthranilate to yield N-(5'-phosphoribosyl)-anthranilate (PRA). The chain is Anthranilate phosphoribosyltransferase from Bacillus cereus (strain G9842).